The sequence spans 218 residues: Carboxylesterase 2 (218 aa).

Active-site charge relay system residues include S114, D168, and H199.

Belongs to the AB hydrolase superfamily. AB hydrolase 2 family. Homodimer.

It catalyses the reaction a carboxylic ester + H2O = an alcohol + a carboxylate + H(+). Hydrolyzes carboxylic ester bonds with relatively broad substrate specificity. The chain is Carboxylesterase 2 (estB) from Pseudomonas fluorescens.